A 104-amino-acid polypeptide reads, in one-letter code: Ig lambda-2 chain C region (104 aa).

The Ig-like domain maps to proline 6–serine 99. Cysteine 27 and cysteine 85 are disulfide-bonded.

In Rattus norvegicus (Rat), this protein is Ig lambda-2 chain C region.